We begin with the raw amino-acid sequence, 161 residues long: Protein-export protein SecB (161 aa).

It belongs to the SecB family. In terms of assembly, homotetramer, a dimer of dimers. One homotetramer interacts with 1 SecA dimer.

The protein resides in the cytoplasm. One of the proteins required for the normal export of preproteins out of the cell cytoplasm. It is a molecular chaperone that binds to a subset of precursor proteins, maintaining them in a translocation-competent state. It also specifically binds to its receptor SecA. This is Protein-export protein SecB from Bradyrhizobium diazoefficiens (strain JCM 10833 / BCRC 13528 / IAM 13628 / NBRC 14792 / USDA 110).